The chain runs to 497 residues: NAD(P)H-quinone oxidoreductase chain 4, chloroplastic (497 aa).

A run of 14 helical transmembrane segments spans residues 4 to 24 (FPWL…IFLF), 35 to 55 (YTVC…CYHF), 84 to 104 (GLSI…TLAA), 111 to 131 (CKLF…PFSS), 134 to 154 (ILLF…LLAM), 167 to 187 (FILY…GIGL), 208 to 228 (ALEI…SPII), 242 to 262 (HYST…YGLV), 274 to 294 (SIFC…AASA), 305 to 325 (IAYS…SISD), 330 to 350 (GAIL…FLSG), 386 to 406 (LALP…GIIT), 411 to 431 (FLIM…LTPI), and 463 to 483 (FISI…DFIF).

This sequence belongs to the complex I subunit 4 family.

Its subcellular location is the plastid. It is found in the chloroplast thylakoid membrane. It carries out the reaction a plastoquinone + NADH + (n+1) H(+)(in) = a plastoquinol + NAD(+) + n H(+)(out). It catalyses the reaction a plastoquinone + NADPH + (n+1) H(+)(in) = a plastoquinol + NADP(+) + n H(+)(out). This is NAD(P)H-quinone oxidoreductase chain 4, chloroplastic (ndhD) from Lotus japonicus (Lotus corniculatus var. japonicus).